The primary structure comprises 201 residues: Small ribosomal subunit protein uS4 (201 aa).

A disordered region spans residues 26-45; that stretch reads FEKRNYPPGQHGNNRRRGKK. Positions 93–153 constitute an S4 RNA-binding domain; the sequence is SRLDNVVYRM…EKSKSLAVVQ (61 aa).

The protein belongs to the universal ribosomal protein uS4 family. Part of the 30S ribosomal subunit. Contacts protein S5. The interaction surface between S4 and S5 is involved in control of translational fidelity.

Its function is as follows. One of the primary rRNA binding proteins, it binds directly to 16S rRNA where it nucleates assembly of the body of the 30S subunit. With S5 and S12 plays an important role in translational accuracy. This Christiangramia forsetii (strain DSM 17595 / CGMCC 1.15422 / KT0803) (Gramella forsetii) protein is Small ribosomal subunit protein uS4.